The sequence spans 307 residues: Putative flagellar export/assembly protein LafU (307 aa).

A helical transmembrane segment spans residues 32–54 (AWKVAFADFTLAMMALFMTLWIV). The disordered stretch occupies residues 87–108 (SPSHPPKPATVAAPEETEKKAR). The OmpA-like domain occupies 154 to 272 (LRVLIKDDQN…RIEIMVLTKS (119 aa)).

The protein belongs to the MotB family.

It localises to the cell inner membrane. Functionally, part of the flagellar gene cluster Flag-2. However, the Flag-2 flagellar system could be inactive in strain 042 due to a frameshift in lfgC. This chain is Putative flagellar export/assembly protein LafU, found in Escherichia coli O44:H18 (strain 042 / EAEC).